The chain runs to 132 residues: Holo-[acyl-carrier-protein] synthase (132 aa).

Mg(2+) is bound by residues Asp-8 and Glu-57.

It belongs to the P-Pant transferase superfamily. AcpS family. It depends on Mg(2+) as a cofactor.

The protein resides in the cytoplasm. The catalysed reaction is apo-[ACP] + CoA = holo-[ACP] + adenosine 3',5'-bisphosphate + H(+). Transfers the 4'-phosphopantetheine moiety from coenzyme A to a Ser of acyl-carrier-protein. The sequence is that of Holo-[acyl-carrier-protein] synthase from Methylobacterium nodulans (strain LMG 21967 / CNCM I-2342 / ORS 2060).